The following is a 148-amino-acid chain: Large ribosomal subunit protein bL9 (148 aa).

The protein belongs to the bacterial ribosomal protein bL9 family.

In terms of biological role, binds to the 23S rRNA. This Thermobifida fusca (strain YX) protein is Large ribosomal subunit protein bL9.